Consider the following 146-residue polypeptide: Large ribosomal subunit protein uL15 (146 aa).

Basic and acidic residues predominate over residues 1 to 13 (MKLHELYPAEGSR). The disordered stretch occupies residues 1 to 55 (MKLHELYPAEGSRKVRNRVGRGAATGNGKTSGRGQKGQKARSGGKVRPGFEGGQL). Residues 23–35 (AATGNGKTSGRGQ) show a composition bias toward gly residues.

The protein belongs to the universal ribosomal protein uL15 family. Part of the 50S ribosomal subunit.

In terms of biological role, binds to the 23S rRNA. This chain is Large ribosomal subunit protein uL15, found in Staphylococcus carnosus (strain TM300).